The primary structure comprises 108 residues: Universal stress protein Slr1101 (108 aa).

It belongs to the universal stress protein A family.

The polypeptide is Universal stress protein Slr1101 (Synechocystis sp. (strain ATCC 27184 / PCC 6803 / Kazusa)).